The following is a 297-amino-acid chain: HTH-type transcriptional regulator ArgP (297 aa).

One can recognise an HTH lysR-type domain in the interval 4–60 (PDYRTLQALDAVIRERGFERAAQKLCITQSAVSQRIKQLENLFGQPLLVRTIPPRPT). The segment at residues 21-40 (FERAAQKLCITQSAVSQRIK) is a DNA-binding region (H-T-H motif).

This sequence belongs to the LysR transcriptional regulatory family. Homodimer.

In terms of biological role, controls the transcription of genes involved in arginine and lysine metabolism. The protein is HTH-type transcriptional regulator ArgP of Pectobacterium carotovorum subsp. carotovorum (strain PC1).